A 272-amino-acid polypeptide reads, in one-letter code: NAD kinase (272 aa).

Asp-62 serves as the catalytic Proton acceptor. NAD(+) is bound by residues 62 to 63, Arg-67, 129 to 130, Arg-140, Lys-157, Asp-159, 170 to 175, Ala-194, and Gln-229; these read DG, NE, and SSYSSS.

The protein belongs to the NAD kinase family. It depends on a divalent metal cation as a cofactor.

The protein resides in the cytoplasm. The enzyme catalyses NAD(+) + ATP = ADP + NADP(+) + H(+). Its function is as follows. Involved in the regulation of the intracellular balance of NAD and NADP, and is a key enzyme in the biosynthesis of NADP. Catalyzes specifically the phosphorylation on 2'-hydroxyl of the adenosine moiety of NAD to yield NADP. In Thermoplasma volcanium (strain ATCC 51530 / DSM 4299 / JCM 9571 / NBRC 15438 / GSS1), this protein is NAD kinase.